Here is a 242-residue protein sequence, read N- to C-terminus: Transcription factor Spi-C (242 aa).

Positions 112–195 (LRLFEYLFES…IRRKLTYQFS (84 aa)) form a DNA-binding region, ETS.

Belongs to the ETS family. In terms of assembly, binds DNA as a monomer. Expressed in lymphoid tissues, including spleen, bone marrow and thymus. According to PubMed:19037245, highly expressed in red pulp macrophages and, at lower, levels in B-cells, but not in other cells, including, monocytes, dendritic cells and other tissue macrophages. According to PubMed:10464163 expressed in pre- and mature B-cells but not in immature B-cells; according to PubMed:10187812 not expressed in pre- but predominantly in mature B-cells and at lower levels in macrophages.

It localises to the nucleus. Its function is as follows. Controls the development of red pulp macrophages required for red blood cells recycling and iron homeostasis. Transcription factor that binds to the PU-box, a purine-rich DNA sequence (5'-GAGGA[AT]-3') that can act as a lymphoid-specific enhancer. Regulates VCAM1 gene expression. The chain is Transcription factor Spi-C (Spic) from Mus musculus (Mouse).